Consider the following 651-residue polypeptide: Chaperone protein HtpG (651 aa).

Residues 1–353 form an a; substrate-binding region; sequence MAPHVEQLEF…AQDMSLNVSR (353 aa). A b region spans residues 354 to 569; the sequence is EILQQDRQIR…TFGITPALAR (216 aa). A c region spans residues 570–651; sequence MYRASGQPVP…RLTRMVGEQS (82 aa).

It belongs to the heat shock protein 90 family. Homodimer.

The protein resides in the cytoplasm. Its function is as follows. Molecular chaperone. Has ATPase activity. The chain is Chaperone protein HtpG from Mycolicibacterium gilvum (strain PYR-GCK) (Mycobacterium gilvum (strain PYR-GCK)).